The chain runs to 371 residues: MNKNCLICHRKAAGQHYGVLSCFACKMFFHRMVVENLHYCCQKFNKCYEKFIILPKCKACRYQKCLEMGMQAFPRRVKSFEESMDLKIQRMLMNLSEMDEQRHWRMLNSYSIEDPSLGDVLVDSNVMKIMRKPSNQKVTAHEWAFLDVYSRISHFSNFEFMNNISFADRKLIFSFNCLRTGVFHGSMRTLREQRDCLLTPSGEDVYPDAVHNLFKDSPGLLNRTCCLLVSKLIELKVTNEEYQLLSLIFFCNPTISHNLSDFARNTLASHQIKYSSALFRHLQITNPGTAPVRFQELISLVHVINRVTNDMQHVSMMFQCMIPSFKFKQLVTDTFVDCGVVQKKSNVKILNEKPCADSSQDFIFHKNKFIH.

The segment at residues 2 to 77 (NKNCLICHRK…MGMQAFPRRV (76 aa)) is a DNA-binding region (nuclear receptor). 2 NR C4-type zinc fingers span residues 5–25 (CLIC…CFAC) and 41–60 (CQKF…CKAC). In terms of domain architecture, NR LBD spans 98–337 (MDEQRHWRML…KQLVTDTFVD (240 aa)).

The protein belongs to the nuclear hormone receptor family.

It is found in the nucleus. In terms of biological role, orphan nuclear receptor. This Caenorhabditis elegans protein is Nuclear hormone receptor family member nhr-51 (nhr-51).